The primary structure comprises 557 residues: Venom carboxylesterase-6 (557 aa).

The N-terminal stretch at 1–21 is a signal peptide; the sequence is MYMLKLSYILLFLGFVKFSWQ. Residues Cys88 and Cys108 are joined by a disulfide bond. N-linked (GlcNAc...) asparagine glycosylation is present at Asn145. The active-site Acyl-ester intermediate is the Ser212. Cys264 and Cys275 are disulfide-bonded. The active-site Charge relay system is Glu341. N-linked (GlcNAc...) asparagine glycosylation is present at Asn374. His464 functions as the Charge relay system in the catalytic mechanism. Residues Asn478, Asn528, and Asn542 are each glycosylated (N-linked (GlcNAc...) asparagine).

Belongs to the type-B carboxylesterase/lipase family. As to expression, expressed by the venom gland.

Its subcellular location is the secreted. It carries out the reaction a carboxylic ester + H2O = an alcohol + a carboxylate + H(+). The polypeptide is Venom carboxylesterase-6 (Apis mellifera (Honeybee)).